Reading from the N-terminus, the 531-residue chain is Pyruvate kinase (531 aa).

Position 86 (R86) interacts with substrate. Residues N88, S90, D121, and T122 each coordinate K(+). 88–91 (NFSH) lines the ATP pocket. The ATP site is built by R128 and K211. Position 277 (E277) interacts with Mg(2+). Substrate is bound by residues G300, D301, and T333. Position 301 (D301) interacts with Mg(2+).

Belongs to the pyruvate kinase family. Homotetramer. Mg(2+) is required as a cofactor. It depends on K(+) as a cofactor.

The enzyme catalyses pyruvate + ATP = phosphoenolpyruvate + ADP + H(+). Its pathway is carbohydrate degradation; glycolysis; pyruvate from D-glyceraldehyde 3-phosphate: step 5/5. The polypeptide is Pyruvate kinase (PYK) (Eimeria tenella (Coccidian parasite)).